A 654-amino-acid polypeptide reads, in one-letter code: APC membrane recruitment protein 2 (654 aa).

4 disordered regions span residues 1–105 (MEVQ…TAPL), 224–289 (ECGN…QSEQ), 316–369 (IIAD…PQVS), and 381–654 (PAHQ…QSRK). Positions 9 to 18 (EPPPCDPQPP) are enriched in pro residues. A compositionally biased stretch (basic and acidic residues) spans 60–70 (ELVRSKTHDGL). Over residues 427 to 454 (PQKDEDSPAPRRAEPVLHHAPARLEKRP) the composition is skewed to basic and acidic residues. Residues 468–479 (SGSSKTGKQQPS) show a composition bias toward polar residues. A compositionally biased stretch (low complexity) spans 565–575 (SPKCSSSATSS). Over residues 576 to 586 (FRSMKGSTSLP) the composition is skewed to polar residues. Low complexity predominate over residues 601–621 (SHSSSQGALSSNLSPTSTTPP). The segment covering 644–654 (GKSTSTSQSRK) has biased composition (polar residues).

The protein belongs to the Amer family.

The protein resides in the cell membrane. Its function is as follows. Negative regulator of the canonical Wnt signaling pathway involved in neuroectodermal patterning. Acts by specifically binding phosphatidylinositol 4,5-bisphosphate (PtdIns(4,5)P2), translocating to the cell membrane and interacting with key regulators of the canonical Wnt signaling pathway, such as components of the beta-catenin destruction complex. This is APC membrane recruitment protein 2 (amer2) from Danio rerio (Zebrafish).